Here is a 676-residue protein sequence, read N- to C-terminus: Methionine--tRNA ligase (676 aa).

Residues P15–H25 carry the 'HIGH' region motif. Zn(2+)-binding residues include C146, C149, C159, and C162. The 'KMSKS' region motif lies at K332 to S336. K335 provides a ligand contact to ATP. Residues D575–K676 form the tRNA-binding domain.

Belongs to the class-I aminoacyl-tRNA synthetase family. MetG type 1 subfamily. Homodimer. It depends on Zn(2+) as a cofactor.

Its subcellular location is the cytoplasm. It carries out the reaction tRNA(Met) + L-methionine + ATP = L-methionyl-tRNA(Met) + AMP + diphosphate. In terms of biological role, is required not only for elongation of protein synthesis but also for the initiation of all mRNA translation through initiator tRNA(fMet) aminoacylation. The protein is Methionine--tRNA ligase of Shewanella sp. (strain MR-7).